We begin with the raw amino-acid sequence, 874 residues long: Coatomer subunit gamma-1 (874 aa).

Residues 1-11 (MLKKFDKKDEE) are compositionally biased toward basic and acidic residues. A disordered region spans residues 1–21 (MLKKFDKKDEESGGGSNPLQH). HEAT repeat units follow at residues 64-101 (TEAT…IAED), 283-320 (KELA…KHPS), 322-355 (VTAC…GSES), and 356-392 (SIDR…KYPR). Phosphothreonine is present on Thr594. The segment at 609-874 (RQEIFQEQLA…PVDIILASVG (266 aa)) is interaction with ZNF289/ARFGAP2.

The protein belongs to the COPG family. As to quaternary structure, oligomeric complex that consists of at least the alpha, beta, beta', gamma, delta, epsilon and zeta subunits. Interacts with ZNF289/ARFGAP2 through its C-terminal appendage domain. Interacts with EGFR upon EGF treatment; interaction is essential for regulation of EGF-dependent nuclear transport of EGFR by retrograde trafficking from the Golgi to the ER. The coatomer interacts with KDEL receptors; the interaction is important for retrograde trafficking of KDEL-bearing proteins from the Golgi to the endoplasmic reticulum. Interacts with COPB1. Interacts with TMED10 (via C-terminus). Interacts with TMED2, TMED3, TMED7 and TMED9.

It localises to the cytoplasm. Its subcellular location is the cytosol. It is found in the golgi apparatus membrane. The protein resides in the cytoplasmic vesicle. The protein localises to the COPI-coated vesicle membrane. The coatomer is a cytosolic protein complex that binds to dilysine motifs and reversibly associates with Golgi non-clathrin-coated vesicles, which further mediate biosynthetic protein transport from the ER, via the Golgi up to the trans Golgi network. Coatomer complex is required for budding from Golgi membranes, and is essential for the retrograde Golgi-to-ER transport of dilysine-tagged proteins. In mammals, the coatomer can only be recruited by membranes associated to ADP-ribosylation factors (ARFs), which are small GTP-binding proteins; the complex also influences the Golgi structural integrity, as well as the processing, activity, and endocytic recycling of LDL receptors. Required for limiting lipid storage in lipid droplets. Involved in lipid homeostasis by regulating the presence of perilipin family members PLIN2 and PLIN3 at the lipid droplet surface and promoting the association of adipocyte triglyceride lipase (PNPLA2) with the lipid droplet surface to mediate lipolysis. This chain is Coatomer subunit gamma-1 (Copg1), found in Mus musculus (Mouse).